A 678-amino-acid polypeptide reads, in one-letter code: Exoribonuclease 2 (678 aa).

Residues 193–521 (REDLTALPFV…INHRLLKAHI (329 aa)) form the RNB domain. The S1 motif domain occupies 568 to 650 (ETRFQAEIFD…ENRSLVGKPT (83 aa)). The segment at 658–678 (SETQTSTEQPAEGAENNEPQA) is disordered.

The protein belongs to the RNR ribonuclease family. RNase II subfamily.

Its subcellular location is the cytoplasm. The catalysed reaction is Exonucleolytic cleavage in the 3'- to 5'-direction to yield nucleoside 5'-phosphates.. In terms of biological role, involved in mRNA degradation. Hydrolyzes single-stranded polyribonucleotides processively in the 3' to 5' direction. The sequence is that of Exoribonuclease 2 from Vibrio cholerae serotype O1 (strain ATCC 39541 / Classical Ogawa 395 / O395).